Reading from the N-terminus, the 68-residue chain is DNA-directed RNA polymerase subunit omega (68 aa).

The protein belongs to the RNA polymerase subunit omega family. As to quaternary structure, the RNAP catalytic core consists of 2 alpha, 1 beta, 1 beta' and 1 omega subunit. When a sigma factor is associated with the core the holoenzyme is formed, which can initiate transcription.

The catalysed reaction is RNA(n) + a ribonucleoside 5'-triphosphate = RNA(n+1) + diphosphate. Its function is as follows. Promotes RNA polymerase assembly. Latches the N- and C-terminal regions of the beta' subunit thereby facilitating its interaction with the beta and alpha subunits. The sequence is that of DNA-directed RNA polymerase subunit omega from Alkaliphilus metalliredigens (strain QYMF).